Consider the following 269-residue polypeptide: Tryptophan synthase alpha chain (269 aa).

Active-site proton acceptor residues include Glu45 and Asp56.

It belongs to the TrpA family. As to quaternary structure, tetramer of two alpha and two beta chains.

It carries out the reaction (1S,2R)-1-C-(indol-3-yl)glycerol 3-phosphate + L-serine = D-glyceraldehyde 3-phosphate + L-tryptophan + H2O. The protein operates within amino-acid biosynthesis; L-tryptophan biosynthesis; L-tryptophan from chorismate: step 5/5. The alpha subunit is responsible for the aldol cleavage of indoleglycerol phosphate to indole and glyceraldehyde 3-phosphate. The protein is Tryptophan synthase alpha chain of Shouchella clausii (strain KSM-K16) (Alkalihalobacillus clausii).